The chain runs to 745 residues: MNNRRNGLFRNSLFYILMFLSLMGIIYFFFGGNSGSQTQNIRYSEFVKQLDKNNVKNVSIQPSGGVYKVTGSYRKARTTSSANALGIKSASTKTTSFSTTMLENNSTVDQVSKLAAKHDVKVTAKAEESSGIWVTLLMYIAPVILMLFLFYMMMGQAGQGGGNNRVMNFGKTKAKPADSKQNKVRFSDVAGEEEEKQELVEVVEFLKDPRKFVSLGARIPSGVLLEGPPGTGKTLLAKAVAGEAGVPFFSISGSDFVEMFVGVGASRVRDLFEQAKKNAPSIIFIDEIDAVGRQRGNGMGGGHDEREQTLNQLLVEMDGFTGNEGVIVMAATNRSDVLDPALLRPGRFDRKILVGRPDVKGREAILKVHAKNKPLAADVDLKEIAKQTPGFVGADLENLLNEAALLAARRNKKQVDAADLDEAEDRVIAGPAKHDRVVNKHERETVAYHEAGHTIVGLVLNDARVVHKVTIVPRGRAGGYAIMLPREDQMLMSKRDAKEQMAGLMGGRAAEEIIFGAQSSGASNDFEQATQIARAMVTQYGMSEKLGPVELENANQQAAYQQGMGASAFSQHTAQLIDDEVRRLSQEAHQTATDIIESHREQHKLIAEALLKYETLDEKQILSLFKTGKMPEKDSNEFPSEKAATFEESKRELERREAEKHAQNQSADDKQADSADTTTNVSVAEPSFPSESDASSEVSADSSVNSTANSATESATDSDVATSATGLPNAESATPSSQDDTNSQA.

Residues 1-11 (MNNRRNGLFRN) are Cytoplasmic-facing. The helical transmembrane segment at 12–32 (SLFYILMFLSLMGIIYFFFGG) threads the bilayer. Topologically, residues 33 to 131 (NSGSQTQNIR…VTAKAEESSG (99 aa)) are extracellular. Residues 132–152 (IWVTLLMYIAPVILMLFLFYM) traverse the membrane as a helical segment. The Cytoplasmic portion of the chain corresponds to 153–745 (MMGQAGQGGG…SSQDDTNSQA (593 aa)). 227–234 (GPPGTGKT) is a binding site for ATP. His-449 provides a ligand contact to Zn(2+). Residue Glu-450 is part of the active site. Zn(2+) is bound by residues His-453 and Asp-525. Residues 630 to 673 (MPEKDSNEFPSEKAATFEESKRELERREAEKHAQNQSADDKQAD) are compositionally biased toward basic and acidic residues. The segment at 630-745 (MPEKDSNEFP…SSQDDTNSQA (116 aa)) is disordered. The segment covering 690–704 (SESDASSEVSADSSV) has biased composition (low complexity). Polar residues predominate over residues 705 to 745 (NSTANSATESATDSDVATSATGLPNAESATPSSQDDTNSQA).

It in the central section; belongs to the AAA ATPase family. In the C-terminal section; belongs to the peptidase M41 family. In terms of assembly, homohexamer. Zn(2+) is required as a cofactor.

The protein localises to the cell membrane. In terms of biological role, acts as a processive, ATP-dependent zinc metallopeptidase for both cytoplasmic and membrane proteins. Plays a role in the quality control of integral membrane proteins. The sequence is that of ATP-dependent zinc metalloprotease FtsH from Lactiplantibacillus plantarum (strain ATCC BAA-793 / NCIMB 8826 / WCFS1) (Lactobacillus plantarum).